The chain runs to 505 residues: DNA repair protein RadA (505 aa).

Residues 10–27 form a C4-type zinc finger; the sequence is CSACGADHAQWFGRCPKC. 107–114 provides a ligand contact to ATP; the sequence is GDPGIGKS. Positions 281 to 285 match the RadA KNRFG motif motif; sequence KNRFG. The tract at residues 380–505 is lon-protease-like; it reads DAYLSVAGGL…KIEEDLGKKD (126 aa). The tract at residues 485 to 505 is disordered; that stretch reads NTTDQGNGSEAKIEEDLGKKD. Positions 495-505 are enriched in basic and acidic residues; sequence AKIEEDLGKKD.

Belongs to the RecA family. RadA subfamily.

In terms of biological role, DNA-dependent ATPase involved in processing of recombination intermediates, plays a role in repairing DNA breaks. Stimulates the branch migration of RecA-mediated strand transfer reactions, allowing the 3' invading strand to extend heteroduplex DNA faster. Binds ssDNA in the presence of ADP but not other nucleotides, has ATPase activity that is stimulated by ssDNA and various branched DNA structures, but inhibited by SSB. Does not have RecA's homology-searching function. This chain is DNA repair protein RadA, found in Synechocystis sp. (strain ATCC 27184 / PCC 6803 / Kazusa).